A 142-amino-acid chain; its full sequence is FAD synthase (142 aa).

ATP-binding positions include 9–10, 14–17, and aspartate 92; these read TF and HPGH.

Belongs to the archaeal FAD synthase family. In terms of assembly, homodimer. The cofactor is a divalent metal cation.

It catalyses the reaction FMN + ATP + H(+) = FAD + diphosphate. Its pathway is cofactor biosynthesis; FAD biosynthesis; FAD from FMN: step 1/1. In terms of biological role, catalyzes the transfer of the AMP portion of ATP to flavin mononucleotide (FMN) to produce flavin adenine dinucleotide (FAD) coenzyme. The chain is FAD synthase from Halalkalicoccus jeotgali (strain DSM 18796 / CECT 7217 / JCM 14584 / KCTC 4019 / B3).